The sequence spans 139 residues: Putative pre-16S rRNA nuclease (139 aa).

The protein belongs to the YqgF nuclease family.

It is found in the cytoplasm. Functionally, could be a nuclease involved in processing of the 5'-end of pre-16S rRNA. The protein is Putative pre-16S rRNA nuclease of Legionella pneumophila (strain Lens).